The primary structure comprises 423 residues: TPR repeat-containing protein YpiA (423 aa).

TPR repeat units lie at residues 33–66 (DEDKAIAAQLYYEWGDVEKAISLISDLHDLYPNE), 67–100 (TELTNFYAELLIDIDEEEKALAVLETIPETDPSY), 135–168 (PVIDFALGELYFAQGAYAKAVQYFKTTAEEQSEI), 171–204 (VNVHQRLAESLSASGEFEDAIPWYEKAVDENPDP), 238–271 (TSLYMPLSKSYEAEGMYEEALKTAKEGIRYDEYN), 272–305 (KELFLYAAKMALKIGKSEEGKKLLQEALALDPGF), 306–339 (VEALHTLLAVYHKEEDYDQIIDLIQEVRSYGEED), 340–373 (PKYNWYLASAYTELEQYEEAKQSFEAAYLHYRED), and 374–407 (RDFLYEYASFLLEEGLQKEALPLLKKVLEMDGAN).

As to quaternary structure, interacts with the RNA polymerase core.

This chain is TPR repeat-containing protein YpiA (ypiA), found in Bacillus subtilis (strain 168).